Consider the following 104-residue polypeptide: Nucleoid-associated protein OB0030 (104 aa).

The interval 1–23 (MKGNMNNMMKQMQKMQKKMMQAQ) is disordered.

The protein belongs to the YbaB/EbfC family. In terms of assembly, homodimer.

It localises to the cytoplasm. The protein localises to the nucleoid. Its function is as follows. Binds to DNA and alters its conformation. May be involved in regulation of gene expression, nucleoid organization and DNA protection. This chain is Nucleoid-associated protein OB0030, found in Oceanobacillus iheyensis (strain DSM 14371 / CIP 107618 / JCM 11309 / KCTC 3954 / HTE831).